The following is a 185-amino-acid chain: MIEVRFHGRGGQGAVTAANILAEAAFLEGKYVQAFPFFGVERRGAPVTAFTRIDNKPIRIKTQIYEPDVVVVLDPSLLDAVDVTAGLKDEGIVIVNTEKSKEEVLEKLKKKPKKLAIVDATTIALEILGLPITNTAILGAVAKATGLVKIESIEEAIKDTFSGELGEKNARAAREAYEKTEVFEL.

As to quaternary structure, heterotetramer of one alpha, one beta, one delta and one gamma chain.

It catalyses the reaction 2 oxidized [2Fe-2S]-[ferredoxin] + pyruvate + CoA = 2 reduced [2Fe-2S]-[ferredoxin] + acetyl-CoA + CO2 + H(+). It carries out the reaction 3-methyl-2-oxobutanoate + 2 oxidized [2Fe-2S]-[ferredoxin] + CoA = 2-methylpropanoyl-CoA + 2 reduced [2Fe-2S]-[ferredoxin] + CO2 + H(+). The sequence is that of Pyruvate/ketoisovalerate oxidoreductases common subunit gamma (porG) from Pyrococcus furiosus (strain ATCC 43587 / DSM 3638 / JCM 8422 / Vc1).